The sequence spans 166 residues: Transcriptional repressor NrdR (166 aa).

A zinc finger lies at 3–34 (CPFCGFSDSRVLDSRPTVEGNSIRRRRECCGC). Positions 49-139 (LIVVKKDGRR…VYREFRDAES (91 aa)) constitute an ATP-cone domain.

Belongs to the NrdR family. Requires Zn(2+) as cofactor.

Negatively regulates transcription of bacterial ribonucleotide reductase nrd genes and operons by binding to NrdR-boxes. This Pelotomaculum thermopropionicum (strain DSM 13744 / JCM 10971 / SI) protein is Transcriptional repressor NrdR.